The following is a 505-amino-acid chain: 2,3-bisphosphoglycerate-independent phosphoglycerate mutase (505 aa).

Mn(2+) contacts are provided by Asp11 and Ser61. The active-site Phosphoserine intermediate is the Ser61. Residues His122, 152–153, Arg183, Arg189, 259–262, and Lys332 contribute to the substrate site; these read RD and RTDR. Mn(2+) is bound by residues Asp399, His403, Asp440, His441, and His458.

This sequence belongs to the BPG-independent phosphoglycerate mutase family. In terms of assembly, monomer. Mn(2+) serves as cofactor.

The catalysed reaction is (2R)-2-phosphoglycerate = (2R)-3-phosphoglycerate. Its pathway is carbohydrate degradation; glycolysis; pyruvate from D-glyceraldehyde 3-phosphate: step 3/5. Catalyzes the interconversion of 2-phosphoglycerate and 3-phosphoglycerate. This is 2,3-bisphosphoglycerate-independent phosphoglycerate mutase from Flavobacterium johnsoniae (strain ATCC 17061 / DSM 2064 / JCM 8514 / BCRC 14874 / CCUG 350202 / NBRC 14942 / NCIMB 11054 / UW101) (Cytophaga johnsonae).